Reading from the N-terminus, the 178-residue chain is Large ribosomal subunit protein uL6 (178 aa).

This sequence belongs to the universal ribosomal protein uL6 family. Part of the 50S ribosomal subunit.

In terms of biological role, this protein binds to the 23S rRNA, and is important in its secondary structure. It is located near the subunit interface in the base of the L7/L12 stalk, and near the tRNA binding site of the peptidyltransferase center. This is Large ribosomal subunit protein uL6 from Helicobacter hepaticus (strain ATCC 51449 / 3B1).